Reading from the N-terminus, the 165-residue chain is SsrA-binding protein (165 aa).

The interval 141-165 (KLHDKRQDEKRKQADREVKSALARY) is disordered. A compositionally biased stretch (basic and acidic residues) spans 145–159 (KRQDEKRKQADREVK).

This sequence belongs to the SmpB family.

It is found in the cytoplasm. Functionally, required for rescue of stalled ribosomes mediated by trans-translation. Binds to transfer-messenger RNA (tmRNA), required for stable association of tmRNA with ribosomes. tmRNA and SmpB together mimic tRNA shape, replacing the anticodon stem-loop with SmpB. tmRNA is encoded by the ssrA gene; the 2 termini fold to resemble tRNA(Ala) and it encodes a 'tag peptide', a short internal open reading frame. During trans-translation Ala-aminoacylated tmRNA acts like a tRNA, entering the A-site of stalled ribosomes, displacing the stalled mRNA. The ribosome then switches to translate the ORF on the tmRNA; the nascent peptide is terminated with the 'tag peptide' encoded by the tmRNA and targeted for degradation. The ribosome is freed to recommence translation, which seems to be the essential function of trans-translation. In Prochlorococcus marinus (strain MIT 9313), this protein is SsrA-binding protein.